Reading from the N-terminus, the 34-residue chain is Phalloidin proprotein (34 aa).

A propeptide spanning residues 1–10 (MSDINTTCLP) is cleaved from the precursor. A cross-link (cyclopeptide (Ala-Pro)) is located at residues 11–17 (AWLATCP). A cross-link (2'-cysteinyl-6'-hydroxytryptophan sulfoxide (Trp-Cys)) is located at residues 12 to 16 (WLATC). Positions 18 to 34 (CTGDDVNPTLTCGESLC) are excised as a propeptide.

This sequence belongs to the MSDIN fungal toxin family. Post-translationally, processed by the macrocyclase-peptidase enzyme POPB to yield a toxic cyclic heptapeptide. POPB first removes 10 residues from the N-terminus. Conformational trapping of the remaining peptide forces the enzyme to release this intermediate rather than proceed to macrocyclization. The enzyme rebinds the remaining peptide in a different conformation and catalyzes macrocyclization of the N-terminal 7 residues.

Toxin that belongs to the bicyclic heptapeptides called phallotoxins. Although structurally related to amatoxins, phallotoxins have a different mode of action, which is the stabilization of F-actin. Phallotoxins are poisonous when administered parenterally, but not orally because of poor absorption. In Amanita phalloides (Death cap), this protein is Phalloidin proprotein.